The following is a 280-amino-acid chain: Pyridoxal 5'-phosphate synthase subunit PdxS (280 aa).

Asp12 serves as a coordination point for D-ribose 5-phosphate. The active-site Schiff-base intermediate with D-ribose 5-phosphate is Lys69. A D-ribose 5-phosphate-binding site is contributed by Gly141. Arg153 contributes to the D-glyceraldehyde 3-phosphate binding site. Residues Gly202 and 223 to 224 (GS) contribute to the D-ribose 5-phosphate site.

Belongs to the PdxS/SNZ family. In the presence of PdxT, forms a dodecamer of heterodimers.

The enzyme catalyses aldehydo-D-ribose 5-phosphate + D-glyceraldehyde 3-phosphate + L-glutamine = pyridoxal 5'-phosphate + L-glutamate + phosphate + 3 H2O + H(+). The protein operates within cofactor biosynthesis; pyridoxal 5'-phosphate biosynthesis. Functionally, catalyzes the formation of pyridoxal 5'-phosphate from ribose 5-phosphate (RBP), glyceraldehyde 3-phosphate (G3P) and ammonia. The ammonia is provided by the PdxT subunit. Can also use ribulose 5-phosphate and dihydroxyacetone phosphate as substrates, resulting from enzyme-catalyzed isomerization of RBP and G3P, respectively. In Fusobacterium nucleatum subsp. nucleatum (strain ATCC 25586 / DSM 15643 / BCRC 10681 / CIP 101130 / JCM 8532 / KCTC 2640 / LMG 13131 / VPI 4355), this protein is Pyridoxal 5'-phosphate synthase subunit PdxS.